We begin with the raw amino-acid sequence, 37 residues long: Cytochrome b6-f complex subunit 5 (37 aa).

The helical transmembrane segment at 5–25 threads the bilayer; that stretch reads LLDGLVLGLVFATLGGLFYAA.

Belongs to the PetG family. As to quaternary structure, the 4 large subunits of the cytochrome b6-f complex are cytochrome b6, subunit IV (17 kDa polypeptide, PetD), cytochrome f and the Rieske protein, while the 4 small subunits are PetG, PetL, PetM and PetN. The complex functions as a dimer.

It localises to the cellular thylakoid membrane. Its function is as follows. Component of the cytochrome b6-f complex, which mediates electron transfer between photosystem II (PSII) and photosystem I (PSI), cyclic electron flow around PSI, and state transitions. PetG is required for either the stability or assembly of the cytochrome b6-f complex. This is Cytochrome b6-f complex subunit 5 from Mastigocladus laminosus (Fischerella sp.).